We begin with the raw amino-acid sequence, 66 residues long: Beta-mammal toxin Css2 (66 aa).

Residues 1 to 66 (KEGYLVSKST…VWPLPNKTCN (66 aa)) enclose the LCN-type CS-alpha/beta domain. 4 cysteine pairs are disulfide-bonded: Cys-12–Cys-65, Cys-16–Cys-41, Cys-25–Cys-46, and Cys-29–Cys-48. Asn-66 carries the asparagine amide modification.

Belongs to the long (4 C-C) scorpion toxin superfamily. Sodium channel inhibitor family. Beta subfamily. Post-translationally, C-terminal amidation increases its affinity for sodium channels. As to expression, expressed by the venom gland.

It is found in the secreted. Its function is as follows. Beta toxin that binds site-4 of sodium channels (Nav) and reduces peak current (observed on Nav1.6/SCN8A (IC(50)=307 nM)), shifts the voltage of activation toward more negative potentials (observed on Nav1.6, Nav1.1 (weak), Nav1.2 (weak), and Nav1.7 (weak)), and induces resurgent currents at negative voltages following brief and strong depolarizations (observed on Nav1.6, Nav1.1 (weak), and Nav1.7 (weak)). A reduction of peak current of Nav1.5/SCN7A has been observed in another study (IC(50)=35-40 nM). This toxin is only active on mammals. It has been shown to bind phospholipids. This is Beta-mammal toxin Css2 from Centruroides suffusus (Durango bark scorpion).